The primary structure comprises 206 residues: Small ribosomal subunit protein uS3 (206 aa).

Residues 39–107 (IRSYINESFK…SVEVNVVGIK (69 aa)) form the KH type-2 domain.

This sequence belongs to the universal ribosomal protein uS3 family. Part of the 30S ribosomal subunit. Forms a tight complex with proteins S10 and S14.

Functionally, binds the lower part of the 30S subunit head. Binds mRNA in the 70S ribosome, positioning it for translation. This is Small ribosomal subunit protein uS3 from Wolbachia sp. subsp. Brugia malayi (strain TRS).